A 41-amino-acid chain; its full sequence is Photosystem II reaction center protein L (41 aa).

A helical membrane pass occupies residues 20-40; the sequence is SLYLGLLLVFVVGLLFSSYFL.

It belongs to the PsbL family. PSII is composed of 1 copy each of membrane proteins PsbA, PsbB, PsbC, PsbD, PsbE, PsbF, PsbH, PsbI, PsbJ, PsbK, PsbL, PsbM, PsbT, PsbX, PsbY, PsbZ, Psb30/Ycf12, peripheral proteins PsbO, CyanoQ (PsbQ), PsbU, PsbV and a large number of cofactors. It forms dimeric complexes.

It localises to the cellular thylakoid membrane. One of the components of the core complex of photosystem II (PSII). PSII is a light-driven water:plastoquinone oxidoreductase that uses light energy to abstract electrons from H(2)O, generating O(2) and a proton gradient subsequently used for ATP formation. It consists of a core antenna complex that captures photons, and an electron transfer chain that converts photonic excitation into a charge separation. This subunit is found at the monomer-monomer interface and is required for correct PSII assembly and/or dimerization. This Synechococcus sp. (strain JA-2-3B'a(2-13)) (Cyanobacteria bacterium Yellowstone B-Prime) protein is Photosystem II reaction center protein L.